A 263-amino-acid polypeptide reads, in one-letter code: Ribonuclease 3 (263 aa).

The tract at residues 1 to 23 (MPHSKNQRKHRHHSHSERRRQPK) is disordered. The RNase III domain occupies 35-164 (FDELLRTLNL…FVGALYLDQG (130 aa)). Residue Glu-77 participates in Mg(2+) binding. Asp-81 is a catalytic residue. Positions 150 and 153 each coordinate Mg(2+). Glu-153 is an active-site residue. The DRBM domain maps to 190–259 (DFKSQLQEFI…AQQALITLSQ (70 aa)).

The protein belongs to the ribonuclease III family. In terms of assembly, homodimer. Mg(2+) serves as cofactor.

The protein resides in the cytoplasm. It catalyses the reaction Endonucleolytic cleavage to 5'-phosphomonoester.. Digests double-stranded RNA. Involved in the processing of primary rRNA transcript to yield the immediate precursors to the large and small rRNAs (23S and 16S). Processes some mRNAs, and tRNAs when they are encoded in the rRNA operon. Processes pre-crRNA and tracrRNA of type II CRISPR loci if present in the organism. The protein is Ribonuclease 3 of Halalkalibacterium halodurans (strain ATCC BAA-125 / DSM 18197 / FERM 7344 / JCM 9153 / C-125) (Bacillus halodurans).